The following is a 502-amino-acid chain: Glutamate dehydrogenase, mitochondrial (502 aa).

Residue 96-98 participates in NAD(+) binding; the sequence is HHR. The substrate site is built by Lys102 and Lys126. Asp131 contacts NAD(+). Residue Lys138 is part of the active site. Ser394 provides a ligand contact to substrate.

It belongs to the Glu/Leu/Phe/Val dehydrogenases family. As to quaternary structure, homohexamer.

The protein localises to the mitochondrion matrix. The catalysed reaction is L-glutamate + NAD(+) + H2O = 2-oxoglutarate + NH4(+) + NADH + H(+). It carries out the reaction L-glutamate + NADP(+) + H2O = 2-oxoglutarate + NH4(+) + NADPH + H(+). With respect to regulation, subject to allosteric regulation. Activated by AMP and ADP. The polypeptide is Glutamate dehydrogenase, mitochondrial (gluD) (Dictyostelium discoideum (Social amoeba)).